Here is a 361-residue protein sequence, read N- to C-terminus: S-adenosylmethionine:tRNA ribosyltransferase-isomerase (361 aa).

It belongs to the QueA family. In terms of assembly, monomer.

The protein resides in the cytoplasm. It catalyses the reaction 7-aminomethyl-7-carbaguanosine(34) in tRNA + S-adenosyl-L-methionine = epoxyqueuosine(34) in tRNA + adenine + L-methionine + 2 H(+). The protein operates within tRNA modification; tRNA-queuosine biosynthesis. In terms of biological role, transfers and isomerizes the ribose moiety from AdoMet to the 7-aminomethyl group of 7-deazaguanine (preQ1-tRNA) to give epoxyqueuosine (oQ-tRNA). The chain is S-adenosylmethionine:tRNA ribosyltransferase-isomerase from Rhizobium etli (strain ATCC 51251 / DSM 11541 / JCM 21823 / NBRC 15573 / CFN 42).